Here is a 270-residue protein sequence, read N- to C-terminus: Glutamate racemase (270 aa).

Substrate contacts are provided by residues 7–8 (DS) and 39–40 (YG). Cys70 acts as the Proton donor/acceptor in catalysis. 71-72 (NT) serves as a coordination point for substrate. Cys194 acts as the Proton donor/acceptor in catalysis. A substrate-binding site is contributed by 195 to 196 (TH).

It belongs to the aspartate/glutamate racemases family.

The enzyme catalyses L-glutamate = D-glutamate. Its pathway is cell wall biogenesis; peptidoglycan biosynthesis. Provides the (R)-glutamate required for cell wall biosynthesis. The sequence is that of Glutamate racemase from Cereibacter sphaeroides (strain ATCC 17023 / DSM 158 / JCM 6121 / CCUG 31486 / LMG 2827 / NBRC 12203 / NCIMB 8253 / ATH 2.4.1.) (Rhodobacter sphaeroides).